The primary structure comprises 305 residues: uncharacterized protein (305 aa).

In terms of domain architecture, ABC transporter spans 5 to 233 (LELKNVTKNI…ENDTYFFQVE (229 aa)). Position 37-44 (37-44 (GPNGAGKT)) interacts with ATP.

The protein belongs to the ABC transporter superfamily.

This is an uncharacterized protein from Bacillus subtilis (strain 168).